The primary structure comprises 468 residues: Envelope glycoprotein C (468 aa).

The first 30 residues, 1–30 (MWLPNLVRFVAVAYLICAGAILTYASGASA), serve as a signal peptide directing secretion. The segment covering 31–50 (SSSQSTPATPTHTTPNLTTA) has biased composition (low complexity). The disordered stretch occupies residues 31–73 (SSSQSTPATPTHTTPNLTTAHGAGSDNTTNANGTESTHSHETT). Topologically, residues 31–431 (SSSQSTPATP…IVEDRPVLTS (401 aa)) are virion surface. Residues N46, N57, N62, N92, N100, N131, N203, N208, and N269 are each glycosylated (N-linked (GlcNAc...) asparagine; by host). C76 and C93 are disulfide-bonded. Ig-like domains lie at 220–311 (PLLD…DEVS) and 321–416 (PSVF…DTVV). 3 disulfides stabilise this stretch: C239/C301, C340/C399, and C344/C373. Residues 432-451 (IIAVTCGAAALALVVLITAV) traverse the membrane as a helical segment. Residues 452 to 468 (CFYCSKPSQAPYKKSDF) are Cytoplasmic-facing.

This sequence belongs to the herpesviridae glycoprotein C family. Interacts with host complement component C3; this interaction inhibits host immune response by disregulating complement cascade.

It localises to the virion membrane. Essential for the initial attachment to heparan sulfate moieties of the host cell surface proteoglycans. Also plays a role in host immune evasion by inhibiting the host complement cascade activation. The sequence is that of Envelope glycoprotein C (gC) from Equus caballus (Horse).